Consider the following 105-residue polypeptide: Cuticle protein AMP4 (105 aa).

The interval 1-21 (DRDAQTLTDERNDQGDGNFRY) is disordered. One can recognise a Chitin-binding type R&amp;R domain in the interval 16–81 (DGNFRYEFET…PSSDLLPVGP (66 aa)).

As to expression, arthrodial membrane.

This is Cuticle protein AMP4 from Homarus americanus (American lobster).